Consider the following 427-residue polypeptide: 3-phosphoshikimate 1-carboxyvinyltransferase (427 aa).

3 residues coordinate 3-phosphoshikimate: lysine 22, serine 23, and arginine 27. Lysine 22 contacts phosphoenolpyruvate. Phosphoenolpyruvate is bound by residues glycine 93 and arginine 122. Residues serine 167, glutamine 169, aspartate 315, and lysine 342 each contribute to the 3-phosphoshikimate site. Glutamine 169 lines the phosphoenolpyruvate pocket. Aspartate 315 functions as the Proton acceptor in the catalytic mechanism. Phosphoenolpyruvate-binding residues include arginine 346 and arginine 387.

This sequence belongs to the EPSP synthase family. As to quaternary structure, monomer.

It localises to the cytoplasm. The catalysed reaction is 3-phosphoshikimate + phosphoenolpyruvate = 5-O-(1-carboxyvinyl)-3-phosphoshikimate + phosphate. The protein operates within metabolic intermediate biosynthesis; chorismate biosynthesis; chorismate from D-erythrose 4-phosphate and phosphoenolpyruvate: step 6/7. Catalyzes the transfer of the enolpyruvyl moiety of phosphoenolpyruvate (PEP) to the 5-hydroxyl of shikimate-3-phosphate (S3P) to produce enolpyruvyl shikimate-3-phosphate and inorganic phosphate. This is 3-phosphoshikimate 1-carboxyvinyltransferase from Thermus thermophilus (strain ATCC 27634 / DSM 579 / HB8).